A 238-amino-acid chain; its full sequence is Flagellar L-ring protein (238 aa).

Positions 1–17 (MIRKTLAASCAVLLMAG) are cleaved as a signal peptide. Cys18 is lipidated: N-palmitoyl cysteine. Cys18 is lipidated: S-diacylglycerol cysteine.

Belongs to the FlgH family. The basal body constitutes a major portion of the flagellar organelle and consists of four rings (L,P,S, and M) mounted on a central rod.

Its subcellular location is the cell outer membrane. The protein resides in the bacterial flagellum basal body. In terms of biological role, assembles around the rod to form the L-ring and probably protects the motor/basal body from shearing forces during rotation. This Nitratidesulfovibrio vulgaris (strain ATCC 29579 / DSM 644 / CCUG 34227 / NCIMB 8303 / VKM B-1760 / Hildenborough) (Desulfovibrio vulgaris) protein is Flagellar L-ring protein.